The sequence spans 231 residues: Orotidine 5'-phosphate decarboxylase (231 aa).

Substrate-binding positions include Asp11, Lys33, 60–69 (DLKFHDIPNT), Thr120, Arg181, Gln190, Gly210, and Arg211. The active-site Proton donor is the Lys62.

It belongs to the OMP decarboxylase family. Type 1 subfamily. In terms of assembly, homodimer.

It carries out the reaction orotidine 5'-phosphate + H(+) = UMP + CO2. Its pathway is pyrimidine metabolism; UMP biosynthesis via de novo pathway; UMP from orotate: step 2/2. Catalyzes the decarboxylation of orotidine 5'-monophosphate (OMP) to uridine 5'-monophosphate (UMP). The protein is Orotidine 5'-phosphate decarboxylase of Vibrio atlanticus (strain LGP32) (Vibrio splendidus (strain Mel32)).